The sequence spans 495 residues: Rho GTPase-activating protein 19 (495 aa).

A Rho-GAP domain is found at 98–304 (MSLKRKEKGV…FMIKHSQKLF (207 aa)). 2 disordered regions span residues 327 to 362 (KDDLDLLTSPGSKELQPLKSQKRSRLDSCHQEETQQ) and 393 to 495 (KHPS…SSSL). Composition is skewed to basic and acidic residues over residues 350–362 (SRLDSCHQEETQQ), 433–452 (QERKSRDSTPEPKRVSKENV), and 470–481 (KSLEGQKEESCR).

Its function is as follows. GTPase activator for the Rho-type GTPases by converting them to an inactive GDP-bound state. The chain is Rho GTPase-activating protein 19 (ARHGAP19) from Gallus gallus (Chicken).